The primary structure comprises 248 residues: 2,3-bisphosphoglycerate-dependent phosphoglycerate mutase (248 aa).

Substrate contacts are provided by residues 8-15 (RHGESTWN), 21-22 (TG), arginine 60, 87-90 (ERHY), lysine 98, 114-115 (RR), and 183-184 (GN). Histidine 9 serves as the catalytic Tele-phosphohistidine intermediate. Catalysis depends on glutamate 87, which acts as the Proton donor/acceptor.

Belongs to the phosphoglycerate mutase family. BPG-dependent PGAM subfamily. Homodimer.

It catalyses the reaction (2R)-2-phosphoglycerate = (2R)-3-phosphoglycerate. The protein operates within carbohydrate degradation; glycolysis; pyruvate from D-glyceraldehyde 3-phosphate: step 3/5. Its function is as follows. Catalyzes the interconversion of 2-phosphoglycerate and 3-phosphoglycerate. The polypeptide is 2,3-bisphosphoglycerate-dependent phosphoglycerate mutase (Ralstonia nicotianae (strain ATCC BAA-1114 / GMI1000) (Ralstonia solanacearum)).